Reading from the N-terminus, the 148-residue chain is Small ribosomal subunit protein uS7c (148 aa).

This sequence belongs to the universal ribosomal protein uS7 family. Part of the 30S ribosomal subunit.

The protein localises to the plastid. The protein resides in the chloroplast. Its function is as follows. One of the primary rRNA binding proteins, it binds directly to 16S rRNA where it nucleates assembly of the head domain of the 30S subunit. This Cyanidioschyzon merolae (strain NIES-3377 / 10D) (Unicellular red alga) protein is Small ribosomal subunit protein uS7c (rps7).